Here is a 32-residue protein sequence, read N- to C-terminus: MSDIN-like toxin proprotein 1 (32 aa).

The propeptide occupies 1 to 10; that stretch reads MSDINVTRLP. The cyclopeptide (Gly-Pro) cross-link spans 11-18; that stretch reads GFVPILFP. Residues 19–32 constitute a propeptide that is removed on maturation; that stretch reads CVGDDVNTALTRGE.

It belongs to the MSDIN fungal toxin family. Processed by the macrocyclase-peptidase enzyme POPB to yield a toxic cyclic octapeptide. POPB first removes 10 residues from the N-terminus. Conformational trapping of the remaining peptide forces the enzyme to release this intermediate rather than proceed to macrocyclization. The enzyme rebinds the remaining peptide in a different conformation and catalyzes macrocyclization of the N-terminal 8 residues.

Functionally, probable toxin that belongs to the MSDIN-like toxin family responsible for a large number of food poisoning cases and deaths. The polypeptide is MSDIN-like toxin proprotein 1 (Amanita bisporigera (Destroying angel)).